The primary structure comprises 179 residues: Hypoxanthine-guanine phosphoribosyltransferase (179 aa).

The diphosphate site is built by Lys42 and Gly43. Positions 98 and 99 each coordinate Mg(2+). Catalysis depends on Glu102, which acts as the Proton acceptor. GMP contacts are provided by residues Lys130, 151 to 152, and Asp158; that span reads FV. Arg164 contacts diphosphate.

It belongs to the purine/pyrimidine phosphoribosyltransferase family. Mg(2+) serves as cofactor.

Its subcellular location is the cytoplasm. The catalysed reaction is IMP + diphosphate = hypoxanthine + 5-phospho-alpha-D-ribose 1-diphosphate. The enzyme catalyses GMP + diphosphate = guanine + 5-phospho-alpha-D-ribose 1-diphosphate. It participates in purine metabolism; IMP biosynthesis via salvage pathway; IMP from hypoxanthine: step 1/1. Its pathway is purine metabolism; GMP biosynthesis via salvage pathway; GMP from guanine: step 1/1. Its function is as follows. Purine salvage pathway enzyme that catalyzes the transfer of the ribosyl-5-phosphate group from 5-phospho-alpha-D-ribose 1-diphosphate (PRPP) to the N9 position of the 6-oxopurines hypoxanthine and guanine to form the corresponding ribonucleotides IMP (inosine 5'-monophosphate) and GMP (guanosine 5'-monophosphate), with the release of PPi. This is Hypoxanthine-guanine phosphoribosyltransferase (hpt) from Staphylococcus aureus (strain COL).